The sequence spans 402 residues: Prophage integrase IntZ (402 aa).

Positions Ala-103–Val-183 constitute a Core-binding (CB) domain. The Tyr recombinase domain maps to Gly-206–Met-381. Active-site residues include Arg-244, Lys-271, His-332, Arg-335, and His-359. Tyr-368 serves as the catalytic O-(3'-phospho-DNA)-tyrosine intermediate.

Belongs to the 'phage' integrase family.

Functionally, integrase is necessary for integration of the phage into the host genome by site-specific recombination. In conjunction with excisionase, integrase is also necessary for excision of the prophage from the host genome. The protein is Prophage integrase IntZ (intZ) of Escherichia coli (strain K12).